The chain runs to 534 residues: uncharacterized protein (534 aa).

Disordered regions lie at residues 1 to 150, 252 to 284, and 383 to 434; these read MSDS…DIPP, RRFRRREDNERNNSNSPRNFSTHGNGNGENGQP, and WKSQ…PSLP. Residues 8 to 67 are compositionally biased toward basic and acidic residues; it reads SQREDNYSRDRRSRFTEDSYSRRDSQRSGNEAPRESRYYRKEEHLQERSRSRSPARDSRW. Residues 102 to 113 show a composition bias toward polar residues; the sequence is SLQSTKATSSRT. Residues 130-141 show a composition bias toward pro residues; that stretch reads PSAPAPPLPPSS. The span at 252–262 shows a compositional bias: basic and acidic residues; sequence RRFRRREDNER. The segment covering 263–272 has biased composition (low complexity); it reads NNSNSPRNFS. The segment covering 393-408 has biased composition (polar residues); sequence NQGNRAYNPPNRNQAF.

This is an uncharacterized protein from Schizosaccharomyces pombe (strain 972 / ATCC 24843) (Fission yeast).